Reading from the N-terminus, the 194-residue chain is Peptidyl-tRNA hydrolase (194 aa).

Residue tyrosine 16 coordinates tRNA. Catalysis depends on histidine 21, which acts as the Proton acceptor. The tRNA site is built by phenylalanine 67, asparagine 69, and asparagine 115.

The protein belongs to the PTH family. Monomer.

It localises to the cytoplasm. It catalyses the reaction an N-acyl-L-alpha-aminoacyl-tRNA + H2O = an N-acyl-L-amino acid + a tRNA + H(+). Hydrolyzes ribosome-free peptidyl-tRNAs (with 1 or more amino acids incorporated), which drop off the ribosome during protein synthesis, or as a result of ribosome stalling. Its function is as follows. Catalyzes the release of premature peptidyl moieties from peptidyl-tRNA molecules trapped in stalled 50S ribosomal subunits, and thus maintains levels of free tRNAs and 50S ribosomes. The protein is Peptidyl-tRNA hydrolase of Klebsiella pneumoniae (strain 342).